The chain runs to 444 residues: Putative GTP cyclohydrolase URC1 (444 aa).

268-272 (RVHDE) serves as a coordination point for GTP. Zn(2+) contacts are provided by Cys-273, Cys-284, and Cys-286. 315 to 317 (EGR) is a binding site for GTP. Asp-353 functions as the Proton acceptor in the catalytic mechanism. Residue Arg-355 is the Nucleophile of the active site. 2 residues coordinate GTP: Ser-377 and Lys-382.

The protein belongs to the GTP cyclohydrolase II family.

It localises to the cytoplasm. It is found in the nucleus. Functionally, involved in uracil catabolism. In Lachancea kluyveri (Yeast), this protein is Putative GTP cyclohydrolase URC1 (URC1).